The sequence spans 514 residues: 3-octaprenyl-4-hydroxybenzoate carboxy-lyase (514 aa).

Asn-177 serves as a coordination point for Mn(2+). Prenylated FMN is bound by residues 180-182, 194-196, and 199-200; these read IYR, RWL, and RG. A Mn(2+)-binding site is contributed by Glu-243. The active-site Proton donor is the Asp-314.

Belongs to the UbiD family. As to quaternary structure, homohexamer. Requires prenylated FMN as cofactor. Mn(2+) is required as a cofactor.

It is found in the cell membrane. The enzyme catalyses a 4-hydroxy-3-(all-trans-polyprenyl)benzoate + H(+) = a 2-(all-trans-polyprenyl)phenol + CO2. Its pathway is cofactor biosynthesis; ubiquinone biosynthesis. Functionally, catalyzes the decarboxylation of 3-octaprenyl-4-hydroxy benzoate to 2-octaprenylphenol, an intermediate step in ubiquinone biosynthesis. The sequence is that of 3-octaprenyl-4-hydroxybenzoate carboxy-lyase from Bordetella petrii (strain ATCC BAA-461 / DSM 12804 / CCUG 43448).